Consider the following 375-residue polypeptide: Alanine racemase (375 aa).

The active-site Proton acceptor; specific for D-alanine is lysine 38. Lysine 38 bears the N6-(pyridoxal phosphate)lysine mark. Arginine 137 contributes to the substrate binding site. Tyrosine 266 functions as the Proton acceptor; specific for L-alanine in the catalytic mechanism. Methionine 314 lines the substrate pocket.

Belongs to the alanine racemase family. Pyridoxal 5'-phosphate serves as cofactor.

It carries out the reaction L-alanine = D-alanine. It functions in the pathway amino-acid biosynthesis; D-alanine biosynthesis; D-alanine from L-alanine: step 1/1. Its function is as follows. Catalyzes the interconversion of L-alanine and D-alanine. May also act on other amino acids. In Cutibacterium acnes (strain DSM 16379 / KPA171202) (Propionibacterium acnes), this protein is Alanine racemase (alr).